The primary structure comprises 92 residues: DNA/RNA-binding protein Alba (92 aa).

Lys11 carries the post-translational modification N6-acetyllysine.

It belongs to the histone-like Alba family. Acetylated. Acetylation at Lys-11 decreases DNA-binding affinity.

The protein localises to the cytoplasm. It is found in the chromosome. In terms of biological role, binds double-stranded DNA tightly but without sequence specificity. Involved in DNA compaction. The chain is DNA/RNA-binding protein Alba from Pyrobaculum neutrophilum (strain DSM 2338 / JCM 9278 / NBRC 100436 / V24Sta) (Thermoproteus neutrophilus).